Reading from the N-terminus, the 497-residue chain is Alkane hydroxylase MAH1 (497 aa).

The helical transmembrane segment at 3-23 (MLGFYVTFIFFLVCLFTYFFL) threads the bilayer. Position 444 (Cys444) interacts with heme.

Belongs to the cytochrome P450 family. Heme is required as a cofactor. In terms of tissue distribution, expressed in the expanding regions of the inflorescence stems, specifically to the epidermal pavement cells, petioles and siliques.

The protein localises to the endoplasmic reticulum membrane. Functionally, involved in the formation of secondary alcohols and ketones in stem cuticular wax. Catalyzes the hydroxylation of a methylene unit in the middle of alkane molecules to form secondary alcohols and possibly also a second hydroxylation leading to the corresponding ketones. This is Alkane hydroxylase MAH1 from Arabidopsis thaliana (Mouse-ear cress).